The sequence spans 398 residues: Nucleotide-sugar uncharacterized transporter 2 (398 aa).

The next 10 helical transmembrane spans lie at 54-74, 84-104, 119-139, 150-170, 179-199, 201-221, 242-262, 271-291, 299-319, and 322-342; these read FCGP…IILA, FNFP…LLAF, TTPF…SGLA, FYQM…FVLF, VMAL…DLEF, LFGA…KILW, FTVF…VLLF, AILI…LALG, VVLG…IFGS, and GFIS…YTWL.

This sequence belongs to the TPT transporter family. TPT (TC 2.A.7.9) subfamily.

Its subcellular location is the membrane. The polypeptide is Nucleotide-sugar uncharacterized transporter 2 (Arabidopsis thaliana (Mouse-ear cress)).